The chain runs to 356 residues: Riboflavin biosynthesis protein RibD (356 aa).

The deaminase stretch occupies residues 1–148; that stretch reads MIREIDKNYM…EDFFTYITQE (148 aa). The 123-residue stretch at 4–126 folds into the CMP/dCMP-type deaminase domain; it reads EIDKNYMKLA…KLRNAGIEVD (123 aa). Histidine 53 serves as a coordination point for Zn(2+). The Proton donor role is filled by glutamate 55. Residues cysteine 78 and cysteine 87 each contribute to the Zn(2+) site. A reductase region spans residues 149–356; sequence RPYITLKWAQ…EDLVIFFKRY (208 aa). Position 157 (alanine 157) interacts with NADP(+). Substrate is bound at residue serine 171. Tryptophan 173 lines the NADP(+) pocket. Arginine 187 contributes to the substrate binding site. Residues threonine 199 and aspartate 203 each contribute to the NADP(+) site. The substrate site is built by leucine 207, arginine 210, and glutamate 290. 292-298 lines the NADP(+) pocket; the sequence is GPRTLTS.

This sequence in the N-terminal section; belongs to the cytidine and deoxycytidylate deaminase family. It in the C-terminal section; belongs to the HTP reductase family. Zn(2+) serves as cofactor.

The enzyme catalyses 2,5-diamino-6-hydroxy-4-(5-phosphoribosylamino)-pyrimidine + H2O + H(+) = 5-amino-6-(5-phospho-D-ribosylamino)uracil + NH4(+). It carries out the reaction 5-amino-6-(5-phospho-D-ribitylamino)uracil + NADP(+) = 5-amino-6-(5-phospho-D-ribosylamino)uracil + NADPH + H(+). It participates in cofactor biosynthesis; riboflavin biosynthesis; 5-amino-6-(D-ribitylamino)uracil from GTP: step 2/4. It functions in the pathway cofactor biosynthesis; riboflavin biosynthesis; 5-amino-6-(D-ribitylamino)uracil from GTP: step 3/4. Functionally, converts 2,5-diamino-6-(ribosylamino)-4(3h)-pyrimidinone 5'-phosphate into 5-amino-6-(ribosylamino)-2,4(1h,3h)-pyrimidinedione 5'-phosphate. The sequence is that of Riboflavin biosynthesis protein RibD (ribD) from Aquifex aeolicus (strain VF5).